A 242-amino-acid polypeptide reads, in one-letter code: DnaJ homolog subfamily B member 3 (242 aa).

Residues 1 to 69 (MVDYYEVLGV…RKREVYDRCG (69 aa)) enclose the J domain.

In terms of tissue distribution, testis specific. Expression is confined to the germline without any contribution of the somatic components.

Its function is as follows. May operate as a co-chaperone of the male germ cell- and haploid stage-specific Hsp70 proteins. The polypeptide is DnaJ homolog subfamily B member 3 (Dnajb3) (Mus musculus (Mouse)).